The following is a 93-amino-acid chain: Small ribosomal subunit protein uS19c (93 aa).

Belongs to the universal ribosomal protein uS19 family.

The protein localises to the plastid. The protein resides in the chloroplast. Protein S19 forms a complex with S13 that binds strongly to the 16S ribosomal RNA. This Oryza nivara (Indian wild rice) protein is Small ribosomal subunit protein uS19c.